A 211-amino-acid polypeptide reads, in one-letter code: Imidazole glycerol phosphate synthase subunit HisH (211 aa).

A Glutamine amidotransferase type-1 domain is found at 1 to 211; the sequence is MIGIIDYGMG…VGIATGRGNG (211 aa). C79 (nucleophile) is an active-site residue. Active-site residues include H186 and E188.

In terms of assembly, heterodimer of HisH and HisF.

Its subcellular location is the cytoplasm. The enzyme catalyses 5-[(5-phospho-1-deoxy-D-ribulos-1-ylimino)methylamino]-1-(5-phospho-beta-D-ribosyl)imidazole-4-carboxamide + L-glutamine = D-erythro-1-(imidazol-4-yl)glycerol 3-phosphate + 5-amino-1-(5-phospho-beta-D-ribosyl)imidazole-4-carboxamide + L-glutamate + H(+). The catalysed reaction is L-glutamine + H2O = L-glutamate + NH4(+). The protein operates within amino-acid biosynthesis; L-histidine biosynthesis; L-histidine from 5-phospho-alpha-D-ribose 1-diphosphate: step 5/9. Its function is as follows. IGPS catalyzes the conversion of PRFAR and glutamine to IGP, AICAR and glutamate. The HisH subunit catalyzes the hydrolysis of glutamine to glutamate and ammonia as part of the synthesis of IGP and AICAR. The resulting ammonia molecule is channeled to the active site of HisF. The chain is Imidazole glycerol phosphate synthase subunit HisH from Geobacillus kaustophilus (strain HTA426).